We begin with the raw amino-acid sequence, 540 residues long: MIWHVQNENFILDSTRIFMKAFHLLLFDGSLIFPECILIFGLILLLMIDSSSDQKDIPWLYFIPSTSLVMSITALLFRWREEPMISFSGNFQTNNFNEIFQFLILLCSTLCIPLSVEYIECTEMAITEFLLFVLTATLGGMFLCGANDFITIFVAPECFSLCSYLLSGYTKKDVRSNEATMKYLLMGGASSSILVHGFSWLYGSSGGEIELQEIVNGLINTQMYNSPGISIALIFITVGIGFKLSPAPSHQWTPDVYEGVRFVREIPTSLSISEMFGFFKTPWTCRREISPTPVVAFLSVTSKVAASASATRIFDIPFYFSSNGWHLLLEILAILSMILGNLIAITQTSMKRMLAYSSIGQIGYVIIGIIVGDSNDGYASMITYMLFYISMNLGTFACIVLFGLRTGTDNIRDYAGLYTKDPFLALSLALCLLSLGGLPPLAGFFGKLYLFWCGWQAGLYFLVLIGLLTSVVSIYYYLKIIKLLMTGRNQEITPHVRNYRRSPLRSNNSIELSMIVCVIASTIPGISMNPIIAIAQDSLF.

Helical transmembrane passes span 24 to 44 (LLLFDGSLIFPECILIFGLIL), 57 to 77 (IPWLYFIPSTSLVMSITALLF), 99 to 119 (IFQFLILLCSTLCIPLSVEYI), 124 to 144 (MAITEFLLFVLTATLGGMFLC), 149 to 169 (FITIFVAPECFSLCSYLLSGY), 183 to 203 (YLLMGGASSSILVHGFSWLYG), 227 to 247 (PGISIALIFITVGIGFKLSPA), 325 to 345 (WHLLLEILAILSMILGNLIAI), 353 to 373 (MLAYSSIGQIGYVIIGIIVGD), 384 to 404 (YMLFYISMNLGTFACIVLFGL), 425 to 445 (ALSLALCLLSLGGLPPLAGFF), 448 to 468 (LYLFWCGWQAGLYFLVLIGLL), and 514 to 534 (MIVCVIASTIPGISMNPIIAI).

It belongs to the complex I subunit 2 family. As to quaternary structure, NDH is composed of at least 16 different subunits, 5 of which are encoded in the nucleus.

The protein resides in the plastid. It is found in the chloroplast thylakoid membrane. The catalysed reaction is a plastoquinone + NADH + (n+1) H(+)(in) = a plastoquinol + NAD(+) + n H(+)(out). It catalyses the reaction a plastoquinone + NADPH + (n+1) H(+)(in) = a plastoquinol + NADP(+) + n H(+)(out). In terms of biological role, NDH shuttles electrons from NAD(P)H:plastoquinone, via FMN and iron-sulfur (Fe-S) centers, to quinones in the photosynthetic chain and possibly in a chloroplast respiratory chain. The immediate electron acceptor for the enzyme in this species is believed to be plastoquinone. Couples the redox reaction to proton translocation, and thus conserves the redox energy in a proton gradient. This chain is NAD(P)H-quinone oxidoreductase subunit 2 B, chloroplastic, found in Coffea arabica (Arabian coffee).